Consider the following 205-residue polypeptide: Holliday junction branch migration complex subunit RuvA (205 aa).

The domain I stretch occupies residues 1 to 62 (MFEYVTGYVE…EDIMALYGFK (62 aa)). Positions 63–141 (TREERLLFTK…DVVPDAFVDL (79 aa)) are domain II. Residues 142–152 (FSDTESFDTKK) are flexible linker. The interval 153–205 (GSSVELDEALEALRALGYAEREVSRVVPELLKESLTTDQYIKKALSLLLNGKR) is domain III.

The protein belongs to the RuvA family. Homotetramer. Forms an RuvA(8)-RuvB(12)-Holliday junction (HJ) complex. HJ DNA is sandwiched between 2 RuvA tetramers; dsDNA enters through RuvA and exits via RuvB. An RuvB hexamer assembles on each DNA strand where it exits the tetramer. Each RuvB hexamer is contacted by two RuvA subunits (via domain III) on 2 adjacent RuvB subunits; this complex drives branch migration. In the full resolvosome a probable DNA-RuvA(4)-RuvB(12)-RuvC(2) complex forms which resolves the HJ.

Its subcellular location is the cytoplasm. In terms of biological role, the RuvA-RuvB-RuvC complex processes Holliday junction (HJ) DNA during genetic recombination and DNA repair, while the RuvA-RuvB complex plays an important role in the rescue of blocked DNA replication forks via replication fork reversal (RFR). RuvA specifically binds to HJ cruciform DNA, conferring on it an open structure. The RuvB hexamer acts as an ATP-dependent pump, pulling dsDNA into and through the RuvAB complex. HJ branch migration allows RuvC to scan DNA until it finds its consensus sequence, where it cleaves and resolves the cruciform DNA. This chain is Holliday junction branch migration complex subunit RuvA, found in Bacillus mycoides (strain KBAB4) (Bacillus weihenstephanensis).